The primary structure comprises 242 residues: DnaJ homolog subfamily B member 6 (242 aa).

The 68-residue stretch at 2–69 (VDYYEVLGVQ…KKRDIYDRYG (68 aa)) folds into the J domain. Residues 2–146 (VDYYEVLGVQ…TGSFFSTFSG (145 aa)) are interaction with HSP70. The interval 119-242 (FEDFFGHRRG…KEQLLRLDNK (124 aa)) is interaction with KRT18. R135 carries the post-translational modification Omega-N-methylarginine.

As to quaternary structure, homooligomer. Interacts with BAG3, HSPB8 and STUB1. Interacts with ALKBH1. Interacts with HSP70, KRT18 and PTTG. As to expression, expressed in all tissues examined with highest expression in brain and retina and lower levels observed in testis, spleen, heart, liver and kidney.

The protein resides in the cytoplasm. Its subcellular location is the perinuclear region. It localises to the nucleus. It is found in the myofibril. The protein localises to the sarcomere. The protein resides in the z line. Has a stimulatory effect on the ATPase activity of HSP70 in a dose-dependent and time-dependent manner and hence acts as a co-chaperone of HSP70. Plays an indispensable role in the organization of KRT8/KRT18 filaments. Acts as an endogenous molecular chaperone for neuronal proteins including huntingtin. Suppresses aggregation and toxicity of polyglutamine-containing, aggregation-prone proteins. Also reduces cellular toxicity and caspase-3 activity. The sequence is that of DnaJ homolog subfamily B member 6 (DNAJB6) from Bos taurus (Bovine).